The primary structure comprises 141 residues: Arsenate reductase (141 aa).

Cys12 functions as the Nucleophile; cysteine thioarsenate intermediate in the catalytic mechanism.

It belongs to the ArsC family.

It carries out the reaction [glutaredoxin]-dithiol + arsenate + glutathione + H(+) = glutathionyl-S-S-[glutaredoxin] + arsenite + H2O. In terms of biological role, involved in resistance to arsenate. Catalyzes the reduction of arsenate [As(V)] to arsenite [As(III)]. In Escherichia coli (strain K12), this protein is Arsenate reductase.